Here is a 393-residue protein sequence, read N- to C-terminus: LL-diaminopimelate aminotransferase (393 aa).

Residues Tyr14 and Gly41 each contribute to the substrate site. Pyridoxal 5'-phosphate is bound by residues Tyr71, 104–105 (AK), Tyr128, Asn174, Tyr205, and 233–235 (SFS). Substrate-binding residues include Lys105, Tyr128, and Asn174. At Lys236 the chain carries N6-(pyridoxal phosphate)lysine. Pyridoxal 5'-phosphate contacts are provided by Arg244 and Asn275. Residues Asn275 and Arg369 each coordinate substrate.

This sequence belongs to the class-I pyridoxal-phosphate-dependent aminotransferase family. LL-diaminopimelate aminotransferase subfamily. In terms of assembly, homodimer. It depends on pyridoxal 5'-phosphate as a cofactor.

The catalysed reaction is (2S,6S)-2,6-diaminopimelate + 2-oxoglutarate = (S)-2,3,4,5-tetrahydrodipicolinate + L-glutamate + H2O + H(+). It participates in amino-acid biosynthesis; L-lysine biosynthesis via DAP pathway; LL-2,6-diaminopimelate from (S)-tetrahydrodipicolinate (aminotransferase route): step 1/1. In terms of biological role, involved in the synthesis of meso-diaminopimelate (m-DAP or DL-DAP), required for both lysine and peptidoglycan biosynthesis. Catalyzes the direct conversion of tetrahydrodipicolinate to LL-diaminopimelate. The chain is LL-diaminopimelate aminotransferase from Chlamydia muridarum (strain MoPn / Nigg).